Here is a 327-residue protein sequence, read N- to C-terminus: Lactosylceramide 4-alpha-galactosyltransferase (327 aa).

Positions 166-168 (DTD) match the DXD motif motif.

Belongs to the glycosyltransferase 32 family.

The protein localises to the golgi apparatus membrane. The enzyme catalyses a beta-D-Gal-(1-&gt;4)-beta-D-Glc-(1&lt;-&gt;1)-Cer(d18:1(4E)) + UDP-alpha-D-galactose = a globoside Gb3Cer (d18:1(4E)) + UDP + H(+). It carries out the reaction a beta-D-Gal-(1&lt;-&gt;1')-ceramide + UDP-alpha-D-galactose = alpha-D-Gal-(1-&gt;4)-beta-D-Gal-(1&lt;-&gt;1')-Cer + UDP + H(+). It functions in the pathway glycolipid biosynthesis. Catalyzes the transfer of galactose from UDP-alpha-D-galactose to lactosylceramide/beta-D-galactosyl-(1-&gt;4)-beta-D-glucosyl-(1&lt;-&gt;1)-ceramide(d18:1(4E)) to produce globotriaosylceramide/globoside Gb3Cer (d18:1(4E)). Also able to transfer galactose to galactosylceramide/beta-D-Gal-(1&lt;-&gt;1')-Cer. Globoside Gb3Cer is a glycosphingolipid of the globo serie, one of the major types of neutral root structures of glycosphingolipids, that constitute a significant portion of mammalian cell membranes. This is Lactosylceramide 4-alpha-galactosyltransferase (A4GALT) from Gorilla gorilla gorilla (Western lowland gorilla).